A 205-amino-acid polypeptide reads, in one-letter code: MWLLPALLLLCLSGCLSLKGPGSVTGTAGDSLTVWCQYESMYKGYNKYWCRGQYDTSCESIVETKGEEKVERNGRVSIRDHPEALAFTVTMQNLNEDDAGSYWCKIQTVWVLDSWSRDPSDLVRVYVSPAITTPRRTTHPATPPIFLVVNPGRNLSTGEVLTQNSGFRLSSPHFLLVVLLKLPLLLSMLGAVFWVNRPQWAPPGR.

Positions 1 to 17 are cleaved as a signal peptide; that stretch reads MWLLPALLLLCLSGCLS. The Ig-like V-type domain occupies 18 to 120; the sequence is LKGPGSVTGT…VLDSWSRDPS (103 aa). Topologically, residues 18–173 are extracellular; sequence LKGPGSVTGT…NSGFRLSSPH (156 aa). Cysteines 36 and 104 form a disulfide. The N-linked (GlcNAc...) asparagine glycan is linked to Asn154. A helical membrane pass occupies residues 174–194; sequence FLLVVLLKLPLLLSMLGAVFW. Over 195-205 the chain is Cytoplasmic; that stretch reads VNRPQWAPPGR.

This sequence belongs to the CD300 family. Interacts with TYROBP. Post-translationally, N-glycosylated. Present on the surface of mature hematopoietic cells of the monocyte and myeloid lineages (at protein level).

The protein localises to the cell membrane. Functionally, probably acts as an activating receptor. This Homo sapiens (Human) protein is CMRF35-like molecule 2 (CD300E).